The primary structure comprises 383 residues: La protein homolog (383 aa).

The segment at 1-43 (MTEVEAKATATEETTKEEEEAPETTAEQTEESAQETSENVSKL) is disordered. Acidic residues predominate over residues 15 to 33 (TKEEEEAPETTAEQTEESA). An HTH La-type RNA-binding domain is found at 37 to 129 (SENVSKLEAS…RRHPERPLPE (93 aa)). In terms of domain architecture, RRM spans 141–228 (RTVYVKGFAP…RKMQDDYFEE (88 aa)). The xRRM domain occupies 249-368 (HLPKGASVHL…RTPEGRQASR (120 aa)). The disordered stretch occupies residues 343-383 (KDQQARRQASNARNKGRTPEGRQASRPPQEWRRKAKGGRGE).

Its subcellular location is the nucleus. The protein localises to the cytoplasm. In terms of biological role, may be involved in transcription termination by RNA polymerase III. Binds RNA and DNA. Binds to the 3' end of the minus strand of Sindbis virus RNA. This may be significant for Sindbis virus RNA replication. The chain is La protein homolog from Aedes albopictus (Asian tiger mosquito).